A 187-amino-acid polypeptide reads, in one-letter code: Nucleoside-triphosphatase THEP1 (187 aa).

ATP contacts are provided by residues 9–16 (GRPGVGKT) and 100–107 (LIAIDEIG).

It belongs to the THEP1 NTPase family.

The enzyme catalyses a ribonucleoside 5'-triphosphate + H2O = a ribonucleoside 5'-diphosphate + phosphate + H(+). Has nucleotide phosphatase activity towards ATP, GTP, CTP, TTP and UTP. May hydrolyze nucleoside diphosphates with lower efficiency. The sequence is that of Nucleoside-triphosphatase THEP1 from Hyperthermus butylicus (strain DSM 5456 / JCM 9403 / PLM1-5).